The primary structure comprises 207 residues: Uracil phosphoribosyltransferase (207 aa).

5-phospho-alpha-D-ribose 1-diphosphate contacts are provided by residues Arg-77, Arg-102, and Asp-129–Ser-137. Uracil is bound by residues Ile-192 and Gly-197 to Ala-199. Asp-198 lines the 5-phospho-alpha-D-ribose 1-diphosphate pocket.

Belongs to the UPRTase family. Mg(2+) is required as a cofactor.

The catalysed reaction is UMP + diphosphate = 5-phospho-alpha-D-ribose 1-diphosphate + uracil. Its pathway is pyrimidine metabolism; UMP biosynthesis via salvage pathway; UMP from uracil: step 1/1. With respect to regulation, allosterically activated by GTP. Its function is as follows. Catalyzes the conversion of uracil and 5-phospho-alpha-D-ribose 1-diphosphate (PRPP) to UMP and diphosphate. This Dictyoglomus thermophilum (strain ATCC 35947 / DSM 3960 / H-6-12) protein is Uracil phosphoribosyltransferase.